The following is an 833-amino-acid chain: V-type proton ATPase 116 kDa subunit a 4 (833 aa).

Topologically, residues 1-390 are cytoplasmic; the sequence is MASVFRSEEM…DAYGVGSYRE (390 aa). The chain crosses the membrane as a helical span at residues 391 to 409; sequence INPAPYTIITFPFLFAVMF. The Vacuolar segment spans residues 410–411; it reads GD. The chain crosses the membrane as a helical span at residues 412–428; the sequence is CGHGMVMLMAALWMVLN. Over 429–443 the chain is Cytoplasmic; sequence ERHLLAQKSTNEMWN. Residues 444–473 traverse the membrane as a helical segment; it reads IFFNGRYLILLMGIFSIYTGLIYNDCFSKS. Residues 474-538 lie on the Vacuolar side of the membrane; sequence FNIFGSSWSV…ASNKLTFLNS (65 aa). The chain crosses the membrane as a helical span at residues 539-558; it reads YKMKMSVILGIAHMIFGVIL. Over 559 to 576 the chain is Cytoplasmic; that stretch reads SLFNHIYFRRTLNIILQF. A helical membrane pass occupies residues 577–597; it reads IPEMIFMLSLFGYLVFMIIFK. The Vacuolar portion of the chain corresponds to 598–642; sequence WCRYDAHTSRKAPSILIHFIGMFLFDYDDSSNAPLYGHQQEVQTF. The chain crosses the membrane as a helical span at residues 643-662; that stretch reads FVIIALVSVPWMLLIKPFVL. Residues 663 to 720 lie on the Cytoplasmic side of the membrane; the sequence is RAKHQKSQLQSFTIHEDAVEGDHSGHSSKKTAGAHGMKDGHEEEFNFGDIFVHQAIHT. Residues 681-700 form a disordered region; it reads VEGDHSGHSSKKTAGAHGMK. Residues 721 to 745 form a helical membrane-spanning segment; the sequence is IEYCLGCISNTASYLRLWALSLAHA. Residues 746 to 766 lie on the Vacuolar side of the membrane; it reads ELSEVLWTMVMSIGLRLQGWA. The helical transmembrane segment at 767-805 threads the bilayer; it reads GLVGVFIIFAVFAVLTVAILLVMEGLSAFLHALRLHWVE. The Cytoplasmic portion of the chain corresponds to 806–833; the sequence is FQNKFYEGAGSKFSPFSFKHVLEGTAEE.

Belongs to the V-ATPase 116 kDa subunit family. V-ATPase is a heteromultimeric enzyme made up of two complexes: the ATP-hydrolytic V1 complex and the proton translocation V0 complex. The V1 complex consists of three catalytic AB heterodimers that form a heterohexamer, three peripheral stalks each consisting of EG heterodimers, one central rotor including subunits D and F, and the regulatory subunits C and H. The proton translocation complex V0 consists of the proton transport subunit a, a ring of proteolipid subunits c9c'', rotary subunit d, subunits e and f, and the accessory subunits ATP6AP1/Ac45 and ATP6AP2/PRR. Interacts with the V1 complex V-ATPase subunit A ATP6V1A. Interacts with the V0 complex V-ATPase subunit c ATP6V0C. As to expression, specifically expressed in kidney, but not in the heart, brain, spleen, lung, liver, muscle, or testis. Distribution within the kidney appears more widespread than that seen in man. High intensity staining at the surface of intercalated cells, with additional expression in the proximal tubule.

It localises to the apical cell membrane. It is found in the basolateral cell membrane. Subunit of the V0 complex of vacuolar(H+)-ATPase (V-ATPase), a multisubunit enzyme composed of a peripheral complex (V1) that hydrolyzes ATP and a membrane integral complex (V0) that translocates protons. V-ATPase is responsible for acidifying and maintaining the pH of intracellular compartments and in some cell types, is targeted to the plasma membrane, where it is responsible for acidifying the extracellular environment. Involved in normal vectorial acid transport into the urine by the kidney. This is V-type proton ATPase 116 kDa subunit a 4 (Atp6v0a4) from Mus musculus (Mouse).